Reading from the N-terminus, the 287-residue chain is Formamidopyrimidine-DNA glycosylase (287 aa).

P2 serves as the catalytic Schiff-base intermediate with DNA. E3 acts as the Proton donor in catalysis. K60 (proton donor; for beta-elimination activity) is an active-site residue. The DNA site is built by H100 and R119. The segment at 249-283 (QVYGREGEPCRHCGTVIAKIKLGGRSAHFCPQCQP) adopts an FPG-type zinc-finger fold. R273 acts as the Proton donor; for delta-elimination activity in catalysis.

The protein belongs to the FPG family. Monomer. Zn(2+) serves as cofactor.

The enzyme catalyses Hydrolysis of DNA containing ring-opened 7-methylguanine residues, releasing 2,6-diamino-4-hydroxy-5-(N-methyl)formamidopyrimidine.. It carries out the reaction 2'-deoxyribonucleotide-(2'-deoxyribose 5'-phosphate)-2'-deoxyribonucleotide-DNA = a 3'-end 2'-deoxyribonucleotide-(2,3-dehydro-2,3-deoxyribose 5'-phosphate)-DNA + a 5'-end 5'-phospho-2'-deoxyribonucleoside-DNA + H(+). Its function is as follows. Involved in base excision repair of DNA damaged by oxidation or by mutagenic agents. Acts as a DNA glycosylase that recognizes and removes damaged bases. Has a preference for oxidized purines, such as 7,8-dihydro-8-oxoguanine (8-oxoG). Has AP (apurinic/apyrimidinic) lyase activity and introduces nicks in the DNA strand. Cleaves the DNA backbone by beta-delta elimination to generate a single-strand break at the site of the removed base with both 3'- and 5'-phosphates. This Synechocystis sp. (strain ATCC 27184 / PCC 6803 / Kazusa) protein is Formamidopyrimidine-DNA glycosylase (mutM).